A 389-amino-acid chain; its full sequence is Aromatic-amino-acid aminotransferase 2 (389 aa).

The residue at position 233 (lysine 233) is an N6-(pyridoxal phosphate)lysine.

This sequence belongs to the class-I pyridoxal-phosphate-dependent aminotransferase family. In terms of assembly, homodimer. Pyridoxal 5'-phosphate is required as a cofactor.

The catalysed reaction is an aromatic L-alpha-amino acid + 2-oxoglutarate = an aromatic oxo-acid + L-glutamate. In terms of biological role, catalyzes the transamination of phenylalanine, tyrosine and tryptophan. Shows virtually no activity towards aspartic acid, alanine, valine or isoleucine. In Thermococcus litoralis (strain ATCC 51850 / DSM 5473 / JCM 8560 / NS-C), this protein is Aromatic-amino-acid aminotransferase 2.